The chain runs to 370 residues: Aminomethyltransferase (370 aa).

The protein belongs to the GcvT family. As to quaternary structure, the glycine cleavage system is composed of four proteins: P, T, L and H.

It carries out the reaction N(6)-[(R)-S(8)-aminomethyldihydrolipoyl]-L-lysyl-[protein] + (6S)-5,6,7,8-tetrahydrofolate = N(6)-[(R)-dihydrolipoyl]-L-lysyl-[protein] + (6R)-5,10-methylene-5,6,7,8-tetrahydrofolate + NH4(+). Its function is as follows. The glycine cleavage system catalyzes the degradation of glycine. The chain is Aminomethyltransferase from Clostridium botulinum (strain Loch Maree / Type A3).